A 333-amino-acid polypeptide reads, in one-letter code: Adenosine deaminase (333 aa).

His-12 and His-14 together coordinate Zn(2+). Substrate-binding residues include His-14, Asp-16, and Gly-170. Residue His-197 participates in Zn(2+) binding. Catalysis depends on Glu-200, which acts as the Proton donor. Asp-278 provides a ligand contact to Zn(2+). Substrate is bound at residue Asp-279.

Belongs to the metallo-dependent hydrolases superfamily. Adenosine and AMP deaminases family. Adenosine deaminase subfamily. The cofactor is Zn(2+).

It carries out the reaction adenosine + H2O + H(+) = inosine + NH4(+). It catalyses the reaction 2'-deoxyadenosine + H2O + H(+) = 2'-deoxyinosine + NH4(+). Catalyzes the hydrolytic deamination of adenosine and 2-deoxyadenosine. The chain is Adenosine deaminase from Klebsiella pneumoniae (strain 342).